A 359-amino-acid chain; its full sequence is Nicotinate-nucleotide--dimethylbenzimidazole phosphoribosyltransferase (359 aa).

E318 serves as the catalytic Proton acceptor.

Belongs to the CobT family. As to quaternary structure, homodimer.

It carries out the reaction 5,6-dimethylbenzimidazole + nicotinate beta-D-ribonucleotide = alpha-ribazole 5'-phosphate + nicotinate + H(+). It participates in nucleoside biosynthesis; alpha-ribazole biosynthesis; alpha-ribazole from 5,6-dimethylbenzimidazole: step 1/2. In terms of biological role, catalyzes the synthesis of alpha-ribazole-5'-phosphate from nicotinate mononucleotide (NAMN) and 5,6-dimethylbenzimidazole (DMB). The chain is Nicotinate-nucleotide--dimethylbenzimidazole phosphoribosyltransferase from Escherichia coli (strain UTI89 / UPEC).